The chain runs to 62 residues: Defensin BmKDfsin3 (62 aa).

Residues 1 to 24 form the signal peptide; that stretch reads MKTIVILFVLALVFCTLEMGMVEA. Disulfide bonds link Cys-28–Cys-49, Cys-35–Cys-57, and Cys-39–Cys-59.

This sequence belongs to the invertebrate defensin family. Type 2 subfamily. Low expression in both venom and non-venom glands (hemolymph).

The protein localises to the secreted. In terms of biological role, antibacterial peptide active against Gram-positive bacteria (including S.aureus ATCC25923 (MIC=2.5 uM), M.luteus AB93113 (MIC=2.5 uM), and the antibiotic-resistant S.epidermidis PRSE P1389 (MIC=1.25 uM)), but not against Gram-negative bacteria (including E.coli and P.aeruginosa). Also blocks the currents of Kv1.1/KCNA1 (57% inhibition), Kv1.2/KCNA2 (27.5% inhibition), Kv1.3/KCNA3 (IC(50)=23.4 nM, 84.3% inhibition), KCa3.1/KCNN4/IK (15% inhibition), KCa2.3/KCNN3/SK3 (87.5% inhibition) and Kv11.1/KCNH2/ERG1 (30.4% inhibition) channels (tested at 1 uM). It inhibits potassium channel current by interacting with the pore region. The sequence is that of Defensin BmKDfsin3 from Olivierus martensii (Manchurian scorpion).